A 257-amino-acid chain; its full sequence is Glucosamine-6-phosphate deaminase (257 aa).

D64 acts as the Proton acceptor; for enolization step in catalysis. N133 acts as the For ring-opening step in catalysis. H135 (proton acceptor; for ring-opening step) is an active-site residue. E140 (for ring-opening step) is an active-site residue.

Belongs to the glucosamine/galactosamine-6-phosphate isomerase family. NagB subfamily.

The enzyme catalyses alpha-D-glucosamine 6-phosphate + H2O = beta-D-fructose 6-phosphate + NH4(+). The protein operates within amino-sugar metabolism; N-acetylneuraminate degradation; D-fructose 6-phosphate from N-acetylneuraminate: step 5/5. In terms of biological role, catalyzes the reversible isomerization-deamination of glucosamine 6-phosphate (GlcN6P) to form fructose 6-phosphate (Fru6P) and ammonium ion. In Corynebacterium urealyticum (strain ATCC 43042 / DSM 7109), this protein is Glucosamine-6-phosphate deaminase.